Consider the following 642-residue polypeptide: Conserved oligomeric Golgi complex subunit 6 (642 aa).

It belongs to the COG6 family. In terms of assembly, component of the conserved oligomeric Golgi complex which is composed of eight different subunits and is required for normal Golgi morphology and localization.

It is found in the golgi apparatus membrane. Its function is as follows. Required for normal Golgi function. The sequence is that of Conserved oligomeric Golgi complex subunit 6 (cogc-6) from Caenorhabditis elegans.